Here is a 155-residue protein sequence, read N- to C-terminus: uncharacterized protein (155 aa).

2 disordered regions span residues 1 to 22 (MSSQKGNVTRSRPQKHQNTFTF) and 110 to 155 (NKEP…DTQA). Serine 2 bears the N-acetylserine mark. 3 positions are modified to phosphoserine: serine 136, serine 144, and serine 146. Residues 136–155 (SDEDLDAESDSDGEDGDTQA) are compositionally biased toward acidic residues.

This is an uncharacterized protein from Mus musculus (Mouse).